Here is a 100-residue protein sequence, read N- to C-terminus: NADH-quinone oxidoreductase subunit K (100 aa).

3 helical membrane passes run 4-24, 29-49, and 60-80; these read TSYY…GVLI, LVLF…LVTF, and IVVF…LALL.

The protein belongs to the complex I subunit 4L family. NDH-1 is composed of 14 different subunits. Subunits NuoA, H, J, K, L, M, N constitute the membrane sector of the complex.

The protein resides in the cell membrane. The enzyme catalyses a quinone + NADH + 5 H(+)(in) = a quinol + NAD(+) + 4 H(+)(out). In terms of biological role, NDH-1 shuttles electrons from NADH, via FMN and iron-sulfur (Fe-S) centers, to quinones in the respiratory chain. The immediate electron acceptor for the enzyme in this species is believed to be ubiquinone. Couples the redox reaction to proton translocation (for every two electrons transferred, four hydrogen ions are translocated across the cytoplasmic membrane), and thus conserves the redox energy in a proton gradient. The protein is NADH-quinone oxidoreductase subunit K of Roseiflexus sp. (strain RS-1).